Here is a 68-residue protein sequence, read N- to C-terminus: Antimicrobial peptide Eval655 (68 aa).

The signal sequence occupies residues 1–23 (MKTQFVVLLVALVLLQMFAQSEA). Residue Leu-36 is modified to Leucine amide. Positions 37–68 (GKRGLKNLDDFDDIFDDDLSSADLEFLKQLMR) are excised as a propeptide.

The protein belongs to the non-disulfide-bridged peptide (NDBP) superfamily. Short antimicrobial peptide (group 4) family. In terms of tissue distribution, expressed by the venom gland.

It is found in the secreted. Its function is as follows. Probable antimicrobial peptide. Shows low inhibitory activity against herpes simplex virus type 1 (HSV-1). This chain is Antimicrobial peptide Eval655, found in Euscorpiops validus (Scorpion).